The sequence spans 447 residues: UDP-N-acetylmuramate--L-alanine ligase (447 aa).

107–113 (GTHGKTT) lines the ATP pocket.

Belongs to the MurCDEF family.

The protein localises to the cytoplasm. It carries out the reaction UDP-N-acetyl-alpha-D-muramate + L-alanine + ATP = UDP-N-acetyl-alpha-D-muramoyl-L-alanine + ADP + phosphate + H(+). The protein operates within cell wall biogenesis; peptidoglycan biosynthesis. Cell wall formation. This chain is UDP-N-acetylmuramate--L-alanine ligase, found in Rubrobacter xylanophilus (strain DSM 9941 / JCM 11954 / NBRC 16129 / PRD-1).